We begin with the raw amino-acid sequence, 364 residues long: MSNPRVYFDITIGNKPEGRIVFELFKDIVPKTAENFRALCTGEKGEGKSGKPLSYQGSLFHRIIKNFMIQGGDFTAGNGTGGESIYGEKFEDENFVLKHEKPFLLSMANAGPGTNGSQFFITTVPTPHLDGKHVVFGKVLKGKAVVRALENLETVSDRPVEDAVIAKCGELAEGEDDGIRASEDGDVYEEYPDDHEGPKEPNDVLQIATHLKDIGNTYFKKGDHANAAKKYLKAIRYLNEKPAFDENDPKELEGKFAAIKIPCYLNRSMCALKLGEYSECVKVTTTVLEYDSKYLKPTDITKAYFRRGSAKMNTRDFEGAIEDFEKAHEKDPEDAGIKKELANAKAKLAAKKQKEKSAYAKMFA.

A PPIase cyclophilin-type domain is found at 7-170; that stretch reads YFDITIGNKP…EDAVIAKCGE (164 aa). 3 TPR repeats span residues 208 to 241, 261 to 294, and 301 to 334; these read ATHLKDIGNTYFKKGDHANAAKKYLKAIRYLNEK, IPCYLNRSMCALKLGEYSECVKVTTTVLEYDSKY, and TKAYFRRGSAKMNTRDFEGAIEDFEKAHEKDPED.

This sequence belongs to the cyclophilin-type PPIase family. PPIase D subfamily.

It is found in the cytoplasm. The catalysed reaction is [protein]-peptidylproline (omega=180) = [protein]-peptidylproline (omega=0). Its function is as follows. PPIases accelerate the folding of proteins. It catalyzes the cis-trans isomerization of proline imidic peptide bonds in oligopeptides. The chain is Peptidyl-prolyl cis-trans isomerase D (cyp12) from Rhizopus delemar (strain RA 99-880 / ATCC MYA-4621 / FGSC 9543 / NRRL 43880) (Mucormycosis agent).